The chain runs to 75 residues: Tautomerase PptA (75 aa).

P2 (proton acceptor; via imino nitrogen) is an active-site residue.

The protein belongs to the 4-oxalocrotonate tautomerase family. PptA subfamily. In terms of assembly, homodimer.

The protein localises to the cytoplasm. In Escherichia coli (strain SMS-3-5 / SECEC), this protein is Tautomerase PptA.